A 369-amino-acid chain; its full sequence is Anhydro-N-acetylmuramic acid kinase (369 aa).

12–19 (GTSMDGVD) provides a ligand contact to ATP.

The protein belongs to the anhydro-N-acetylmuramic acid kinase family.

It carries out the reaction 1,6-anhydro-N-acetyl-beta-muramate + ATP + H2O = N-acetyl-D-muramate 6-phosphate + ADP + H(+). The protein operates within amino-sugar metabolism; 1,6-anhydro-N-acetylmuramate degradation. It participates in cell wall biogenesis; peptidoglycan recycling. Catalyzes the specific phosphorylation of 1,6-anhydro-N-acetylmuramic acid (anhMurNAc) with the simultaneous cleavage of the 1,6-anhydro ring, generating MurNAc-6-P. Is required for the utilization of anhMurNAc either imported from the medium or derived from its own cell wall murein, and thus plays a role in cell wall recycling. In Shewanella halifaxensis (strain HAW-EB4), this protein is Anhydro-N-acetylmuramic acid kinase.